The following is a 371-amino-acid chain: Fructose-1,6-bisphosphatase class 1 1 (371 aa).

Positions 115, 134, 136, and 137 each coordinate Mg(2+). Substrate contacts are provided by residues 137–140 (DGSS), Asn-228, and 280–282 (YLY). Position 300 (Glu-300) interacts with Mg(2+).

This sequence belongs to the FBPase class 1 family. In terms of assembly, homotetramer. Requires Mg(2+) as cofactor.

The protein localises to the cytoplasm. The enzyme catalyses beta-D-fructose 1,6-bisphosphate + H2O = beta-D-fructose 6-phosphate + phosphate. The protein operates within carbohydrate biosynthesis; gluconeogenesis. This chain is Fructose-1,6-bisphosphatase class 1 1, found in Xanthobacter autotrophicus (strain ATCC BAA-1158 / Py2).